Consider the following 81-residue polypeptide: Cytotoxin 1d/1e (81 aa).

The N-terminal stretch at 1–21 (MKTLLLTLVVVTIVCLDLGYT) is a signal peptide. Cystine bridges form between Cys24–Cys42, Cys35–Cys59, Cys63–Cys74, and Cys75–Cys80.

The protein belongs to the three-finger toxin family. Short-chain subfamily. Type IA cytotoxin sub-subfamily. Monomer in solution; Homodimer and oligomer in the presence of negatively charged lipids forming a pore with a size ranging between 20 and 30 Angstroms. In terms of tissue distribution, expressed by the venom gland.

The protein resides in the secreted. The protein localises to the target cell membrane. Shows cytolytic activity on many different cells by forming pore in lipid membranes. In vivo, increases heart rate or kills the animal by cardiac arrest. In addition, it binds to heparin with high affinity, interacts with Kv channel-interacting protein 1 (KCNIP1) in a calcium-independent manner, and binds to integrin alpha-V/beta-3 (ITGAV/ITGB3) with moderate affinity. The chain is Cytotoxin 1d/1e from Naja atra (Chinese cobra).